A 185-amino-acid polypeptide reads, in one-letter code: TATA-box-binding protein 2 (185 aa).

Repeat copies occupy residues 7 to 84 (IENI…ANEL) and 100 to 178 (VQNV…KTQL).

Belongs to the TBP family.

Functionally, general factor that plays a role in the activation of archaeal genes transcribed by RNA polymerase. Binds specifically to the TATA box promoter element which lies close to the position of transcription initiation. The protein is TATA-box-binding protein 2 of Methanosarcina acetivorans (strain ATCC 35395 / DSM 2834 / JCM 12185 / C2A).